A 112-amino-acid polypeptide reads, in one-letter code: ATP synthase epsilon chain (112 aa).

The protein belongs to the ATPase epsilon chain family. As to quaternary structure, F-type ATPases have 2 components, CF(1) - the catalytic core - and CF(0) - the membrane proton channel. CF(1) has five subunits: alpha(3), beta(3), gamma(1), delta(1), epsilon(1). CF(0) has three main subunits: a, b and c.

Its subcellular location is the cell inner membrane. Functionally, produces ATP from ADP in the presence of a proton gradient across the membrane. The polypeptide is ATP synthase epsilon chain (atpC) (Rickettsia prowazekii (strain Madrid E)).